A 452-amino-acid chain; its full sequence is Sulfide:quinone oxidoreductase, mitochondrial (452 aa).

FAD contacts are provided by residues 54–55 (AG), Glu-77, Gln-85, and Val-120. Cys-204 functions as the Cysteine persulfide intermediate in the catalytic mechanism. An intrachain disulfide couples Cys-204 to Cys-380. Residues Asp-337 and 345-348 (KTAA) each bind FAD. The active-site Cysteine persulfide intermediate is Cys-380.

This sequence belongs to the SQRD family. The cofactor is FAD.

It localises to the mitochondrion. It catalyses the reaction ubiquinone-10 + hydrogen sulfide + sulfite + 2 H(+) = ubiquinol-10 + thiosulfate. It carries out the reaction a quinone + hydrogen sulfide + glutathione + H(+) = S-sulfanylglutathione + a quinol. Catalyzes the oxidation of hydrogen sulfide, with the help of a quinone. The chain is Sulfide:quinone oxidoreductase, mitochondrial from Dictyostelium discoideum (Social amoeba).